Here is a 123-residue protein sequence, read N- to C-terminus: MPTSNQLLRNSRQPVRKTKKTPALRGCPQRRGRCSKVYIINPKKPNSGNRKVARVRLTSGFEITAYIPGVGHNVQEHSVVLVRGGRVKDLPGVRYHIVRGTLDAAGVKDRKQGRSKYGVKKPK.

Polar residues predominate over residues Met-1 to Gln-13. Residues Met-1–Arg-30 are disordered. Residues Pro-14–Arg-30 show a composition bias toward basic residues.

This sequence belongs to the universal ribosomal protein uS12 family. Part of the 30S ribosomal subunit.

The protein localises to the plastid. The protein resides in the chloroplast. In terms of biological role, with S4 and S5 plays an important role in translational accuracy. Located at the interface of the 30S and 50S subunits. In Pelargonium hortorum (Common geranium), this protein is Small ribosomal subunit protein uS12cz/uS12cy/uS12cx/uS12w (rps12-A).